A 257-amino-acid chain; its full sequence is Imidazole glycerol phosphate synthase subunit HisF (257 aa).

Catalysis depends on residues Asp-11 and Asp-130.

The protein belongs to the HisA/HisF family. Heterodimer of HisH and HisF.

Its subcellular location is the cytoplasm. It catalyses the reaction 5-[(5-phospho-1-deoxy-D-ribulos-1-ylimino)methylamino]-1-(5-phospho-beta-D-ribosyl)imidazole-4-carboxamide + L-glutamine = D-erythro-1-(imidazol-4-yl)glycerol 3-phosphate + 5-amino-1-(5-phospho-beta-D-ribosyl)imidazole-4-carboxamide + L-glutamate + H(+). The protein operates within amino-acid biosynthesis; L-histidine biosynthesis; L-histidine from 5-phospho-alpha-D-ribose 1-diphosphate: step 5/9. Functionally, IGPS catalyzes the conversion of PRFAR and glutamine to IGP, AICAR and glutamate. The HisF subunit catalyzes the cyclization activity that produces IGP and AICAR from PRFAR using the ammonia provided by the HisH subunit. The protein is Imidazole glycerol phosphate synthase subunit HisF of Shewanella sp. (strain ANA-3).